Consider the following 90-residue polypeptide: DNA-directed RNA polymerase subunit omega (90 aa).

The protein belongs to the RNA polymerase subunit omega family. The RNAP catalytic core consists of 2 alpha, 1 beta, 1 beta' and 1 omega subunit. When a sigma factor is associated with the core the holoenzyme is formed, which can initiate transcription.

The enzyme catalyses RNA(n) + a ribonucleoside 5'-triphosphate = RNA(n+1) + diphosphate. Promotes RNA polymerase assembly. Latches the N- and C-terminal regions of the beta' subunit thereby facilitating its interaction with the beta and alpha subunits. This is DNA-directed RNA polymerase subunit omega from Rhodopirellula baltica (strain DSM 10527 / NCIMB 13988 / SH1).